A 686-amino-acid chain; its full sequence is Pheromone-processing carboxypeptidase KEX1 (686 aa).

The N-terminal stretch at 1 to 19 is a signal peptide; sequence MKFLLPTFIIFIYTLLVSA. Over 20-543 the chain is Lumenal; sequence LPTKEGSDPK…SDSTSSKFTR (524 aa). 2 N-linked (GlcNAc...) asparagine glycosylation sites follow: Asn-85 and Asn-122. Residues Ser-184 and Asp-394 contribute to the active site. N-linked (GlcNAc...) asparagine glycans are attached at residues Asn-441 and Asn-449. His-452 is a catalytic residue. The tract at residues 489–519 is disordered; it reads LGSRKENDESKNPVESPSQTIDPIISSSSSS. Basic and acidic residues predominate over residues 491 to 500; that stretch reads SRKENDESKN. A compositionally biased stretch (low complexity) spans 504–519; it reads SPSQTIDPIISSSSSS. Residues 544 to 564 form a helical membrane-spanning segment; the sequence is LIQLAVILVIFWGVYVLYASY. The Cytoplasmic portion of the chain corresponds to 565–686; the sequence is KSRPSSIIKK…SDPATHKSVS (122 aa). Disordered regions lie at residues 570–590 and 627–686; these read SIIK…TGKK and KDTR…KSVS. Residues 576–586 show a composition bias toward low complexity; sequence TNNTSNITRSS. Basic and acidic residues-rich tracts occupy residues 627-641 and 674-686; these read KDTR…REND and QPRS…KSVS.

The protein belongs to the peptidase S10 family.

Its subcellular location is the golgi apparatus. The protein localises to the trans-Golgi network membrane. It carries out the reaction Preferential release of a C-terminal arginine or lysine residue.. Its function is as follows. Protease with a carboxypeptidase B-like function involved in the C-terminal processing of the lysine and arginine residues from protein precursors. Promotes cell fusion and is involved in the programmed cell death. The sequence is that of Pheromone-processing carboxypeptidase KEX1 (KEX1) from Candida dubliniensis (strain CD36 / ATCC MYA-646 / CBS 7987 / NCPF 3949 / NRRL Y-17841) (Yeast).